A 421-amino-acid chain; its full sequence is 4'-demethylrebeccamycin synthase (421 aa).

It belongs to the glycosyltransferase 28 family.

The enzyme catalyses 4'-demethylrebeccamycin + H2O = dichloroarcyriaflavin A + beta-D-glucose. The protein operates within alkaloid biosynthesis. In terms of biological role, catalyzes the penultimate step in the biosynthesis of rebeccamycin, an indolocarbazole alkaloid that inhibits topoisomerase 1. Has a wide substrate range, including staurosporine aglycone, EJG-III-108A, J-104303, 6-N-methyl-arcyriaflavin and indolo-[2,3-a]-carbazole. The protein is 4'-demethylrebeccamycin synthase (rebG) of Lentzea aerocolonigenes (Lechevalieria aerocolonigenes).